Consider the following 465-residue polypeptide: Cysteine--tRNA ligase (465 aa).

A Zn(2+)-binding site is contributed by Cys29. The short motif at 31–41 is the 'HIGH' region element; that stretch reads ITPYDEVHLGH. Residues Cys212, His237, and Glu241 each coordinate Zn(2+). Positions 269–273 match the 'KMSKS' region motif; that stretch reads KMSKS. Lys272 is a binding site for ATP.

Belongs to the class-I aminoacyl-tRNA synthetase family. In terms of assembly, monomer. Zn(2+) is required as a cofactor.

Its subcellular location is the cytoplasm. The catalysed reaction is tRNA(Cys) + L-cysteine + ATP = L-cysteinyl-tRNA(Cys) + AMP + diphosphate. This is Cysteine--tRNA ligase from Endomicrobium trichonymphae.